We begin with the raw amino-acid sequence, 440 residues long: tRNA(Ile)-lysidine synthase (440 aa).

31-36 (SGGADS) provides a ligand contact to ATP.

The protein belongs to the tRNA(Ile)-lysidine synthase family.

The protein resides in the cytoplasm. The catalysed reaction is cytidine(34) in tRNA(Ile2) + L-lysine + ATP = lysidine(34) in tRNA(Ile2) + AMP + diphosphate + H(+). Its function is as follows. Ligates lysine onto the cytidine present at position 34 of the AUA codon-specific tRNA(Ile) that contains the anticodon CAU, in an ATP-dependent manner. Cytidine is converted to lysidine, thus changing the amino acid specificity of the tRNA from methionine to isoleucine. The sequence is that of tRNA(Ile)-lysidine synthase from Borreliella afzelii (strain PKo) (Borrelia afzelii).